The following is a 90-amino-acid chain: Neuropeptide-like 3 (90 aa).

An N-terminal signal peptide occupies residues 1–16 (MFKLCVFVALLSLAAA). 2 propeptides span residues 17-54 (APAP…LAPQ) and 67-79 (AITQ…LLIK). Residue Ile89 is modified to Isoleucine amide.

Its subcellular location is the secreted. The protein is Neuropeptide-like 3 (Nplp3) of Drosophila melanogaster (Fruit fly).